A 140-amino-acid chain; its full sequence is UPF0132 membrane protein MJ1527 (140 aa).

Transmembrane regions (helical) follow at residues M40–E60, A70–I90, and I92–G112.

It belongs to the UPF0132 family.

The protein resides in the cell membrane. This chain is UPF0132 membrane protein MJ1527, found in Methanocaldococcus jannaschii (strain ATCC 43067 / DSM 2661 / JAL-1 / JCM 10045 / NBRC 100440) (Methanococcus jannaschii).